Here is a 571-residue protein sequence, read N- to C-terminus: Potassium-transporting ATPase potassium-binding subunit (571 aa).

12 helical membrane-spanning segments follow: residues 5–25, 64–84, 136–156, 179–199, 220–240, 254–274, 285–305, 330–350, 375–395, 421–441, 488–508, and 527–547; these read GWMQIALYGAVVLALVRPLGG, LAYAGAMILFNVAGFVLLYAL, GLTHQNFVSAASGMAVAVALI, LYVLLPLSTVLALFYVSQGMP, VGPVASQVAIKMLGTNGGGFF, LSNFLQMLSIFVIGAALTNVF, WAILAAMGLLFLAGVTVTYWA, FGIAASALFAVITTAASCGAV, IIGGVGAGLYGMLVFVVVAIF, MLGILCLPLMMLGFTAIATVV, LAIGMLVGRFFVKIPVLAIAG, and GGLFVGLLVGVVLIIGGLTFF.

Belongs to the KdpA family. As to quaternary structure, the system is composed of three essential subunits: KdpA, KdpB and KdpC.

The protein localises to the cell inner membrane. Its function is as follows. Part of the high-affinity ATP-driven potassium transport (or Kdp) system, which catalyzes the hydrolysis of ATP coupled with the electrogenic transport of potassium into the cytoplasm. This subunit binds the periplasmic potassium ions and delivers the ions to the membrane domain of KdpB through an intramembrane tunnel. The protein is Potassium-transporting ATPase potassium-binding subunit of Methylorubrum extorquens (strain CM4 / NCIMB 13688) (Methylobacterium extorquens).